A 238-amino-acid chain; its full sequence is Zinc import ATP-binding protein ZnuC (238 aa).

One can recognise an ABC transporter domain in the interval 5–220 (IQLNNISVNF…SEFIAIFGNI (216 aa)). ATP is bound at residue 37 to 44 (GPNGAGKS).

This sequence belongs to the ABC transporter superfamily. Zinc importer (TC 3.A.1.15.5) family. As to quaternary structure, the complex is composed of two ATP-binding proteins (ZnuC), two transmembrane proteins (ZnuB) and a solute-binding protein (ZnuA).

It localises to the cell membrane. The enzyme catalyses Zn(2+)(out) + ATP(in) + H2O(in) = Zn(2+)(in) + ADP(in) + phosphate(in) + H(+)(in). Functionally, part of the ABC transporter complex ZnuABC involved in zinc import. Responsible for energy coupling to the transport system. The polypeptide is Zinc import ATP-binding protein ZnuC (Buchnera aphidicola subsp. Baizongia pistaciae (strain Bp)).